Reading from the N-terminus, the 411-residue chain is LIM domain-binding protein 1 (411 aa).

2 disordered regions span residues 284-330 (PPAE…TFAL) and 367-411 (DAAN…QASQ). Low complexity predominate over residues 302–318 (SGGSTMSSGGGNTNNSN). The LIM interaction domain (LID) domain maps to 336-375 (DVMVVGEPTLMGGEFGDEDERLITRLENTQFDAANGIDDE).

It belongs to the LDB family. Forms homodimers and heterodimers. First expressed at stages 15-16 in presumptive limb mesoderm. As limb outgrowth proceeds, expressed in the entire limb bud, concentrating in the distal mesoderm throughout limb development. Both hindlimbs and forelimbs exhibit similar expression patterns.

It localises to the nucleus. Its function is as follows. Binds to the LIM domain of a wide variety of LIM domain-containing transcription factors. The polypeptide is LIM domain-binding protein 1 (Gallus gallus (Chicken)).